Reading from the N-terminus, the 315-residue chain is 4-hydroxy-3-methylbut-2-enyl diphosphate reductase (315 aa).

Residue Cys12 participates in [4Fe-4S] cluster binding. (2E)-4-hydroxy-3-methylbut-2-enyl diphosphate contacts are provided by His43 and His81. Residues His43 and His81 each contribute to the dimethylallyl diphosphate site. Positions 43 and 81 each coordinate isopentenyl diphosphate. Cys103 lines the [4Fe-4S] cluster pocket. His131 serves as a coordination point for (2E)-4-hydroxy-3-methylbut-2-enyl diphosphate. His131 is a dimethylallyl diphosphate binding site. An isopentenyl diphosphate-binding site is contributed by His131. Residue Glu133 is the Proton donor of the active site. Thr170 contacts (2E)-4-hydroxy-3-methylbut-2-enyl diphosphate. Residue Cys198 participates in [4Fe-4S] cluster binding. Residues Ser226, Asn228, and Ser271 each contribute to the (2E)-4-hydroxy-3-methylbut-2-enyl diphosphate site. Dimethylallyl diphosphate is bound by residues Ser226, Asn228, and Ser271. Positions 226, 228, and 271 each coordinate isopentenyl diphosphate.

This sequence belongs to the IspH family. The cofactor is [4Fe-4S] cluster.

The enzyme catalyses isopentenyl diphosphate + 2 oxidized [2Fe-2S]-[ferredoxin] + H2O = (2E)-4-hydroxy-3-methylbut-2-enyl diphosphate + 2 reduced [2Fe-2S]-[ferredoxin] + 2 H(+). It carries out the reaction dimethylallyl diphosphate + 2 oxidized [2Fe-2S]-[ferredoxin] + H2O = (2E)-4-hydroxy-3-methylbut-2-enyl diphosphate + 2 reduced [2Fe-2S]-[ferredoxin] + 2 H(+). It functions in the pathway isoprenoid biosynthesis; dimethylallyl diphosphate biosynthesis; dimethylallyl diphosphate from (2E)-4-hydroxy-3-methylbutenyl diphosphate: step 1/1. The protein operates within isoprenoid biosynthesis; isopentenyl diphosphate biosynthesis via DXP pathway; isopentenyl diphosphate from 1-deoxy-D-xylulose 5-phosphate: step 6/6. In terms of biological role, catalyzes the conversion of 1-hydroxy-2-methyl-2-(E)-butenyl 4-diphosphate (HMBPP) into a mixture of isopentenyl diphosphate (IPP) and dimethylallyl diphosphate (DMAPP). Acts in the terminal step of the DOXP/MEP pathway for isoprenoid precursor biosynthesis. The sequence is that of 4-hydroxy-3-methylbut-2-enyl diphosphate reductase from Anoxybacillus flavithermus (strain DSM 21510 / WK1).